The following is a 402-amino-acid chain: Nuclear hormone receptor family member nhr-96 (402 aa).

Residues 4-79 constitute a DNA-binding region (nuclear receptor); sequence FGLCAVCGQV…VGMDVKKIQQ (76 aa). NR C4-type zinc fingers lie at residues 7-27 and 44-67; these read CAVC…CRSC and CVKA…LKRC. Residues 154–402 enclose the NR LBD domain; sequence NYYNSLELLT…FSDPEMFELT (249 aa).

This sequence belongs to the nuclear hormone receptor family.

It is found in the nucleus. Functionally, orphan nuclear receptor. The sequence is that of Nuclear hormone receptor family member nhr-96 (nhr-96) from Caenorhabditis elegans.